The sequence spans 432 residues: Tyrosine--tRNA ligase (432 aa).

Tyrosine 35 provides a ligand contact to L-tyrosine. The 'HIGH' region motif lies at 40-49 (PTAGSLHVGH). L-tyrosine-binding residues include tyrosine 175 and glutamine 179. The 'KMSKS' region motif lies at 239 to 243 (KFGKT). Residue lysine 242 participates in ATP binding. The region spanning 365–422 (PPLVDLFASTGLVPSKSAARRTIQEGGAYLNNAKVTDIEARVSEADLLHGRYLVLRRG) is the S4 RNA-binding domain.

Belongs to the class-I aminoacyl-tRNA synthetase family. TyrS type 1 subfamily. In terms of assembly, homodimer.

It is found in the cytoplasm. The enzyme catalyses tRNA(Tyr) + L-tyrosine + ATP = L-tyrosyl-tRNA(Tyr) + AMP + diphosphate + H(+). Functionally, catalyzes the attachment of tyrosine to tRNA(Tyr) in a two-step reaction: tyrosine is first activated by ATP to form Tyr-AMP and then transferred to the acceptor end of tRNA(Tyr). This Thermobifida fusca (strain YX) protein is Tyrosine--tRNA ligase.